The sequence spans 146 residues: Vascular endothelial growth factor isoform GtVF (146 aa).

The N-terminal stretch at 1 to 24 is a signal peptide; that stretch reads MAAYLLAVAILFCIQGWPSGTVQG. Residue Gln-25 is modified to Pyrrolidone carboxylic acid. 3 disulfide bridges follow: Cys-38/Cys-80, Cys-69/Cys-115, and Cys-73/Cys-117. Residues 116-146 are disordered; it reads ECRPRSRSGVDSGKRKRNPEEGEPRAKFPFV. Over residues 133–146 the composition is skewed to basic and acidic residues; it reads NPEEGEPRAKFPFV.

It belongs to the PDGF/VEGF growth factor family. Snake venom VEGF subfamily. In terms of assembly, homodimer; disulfide-linked. As to expression, expressed by the venom gland.

The protein resides in the secreted. Snake venom VEGFs that may contribute to venom dispersion and prey subjugation by inducing vascular permeability and hypotension. This protein induces an increase in capillary permeability after intradermal injection, in a VEGFR-2 (KDR) dependent manner. In addition, it provokes a drastic hypotensive effect after intravenous injection. The hypotension is mediated by nitric oxide (NO), which is produced by VEGF-activated endothelium NO synthase. Also induces angiogenesis in vitro. Unlike other crotalid VEGFs, this protein probably interacts with VEGF receptor-2 (KDR). This Gloydius tsushimaensis (Tsushima Island pitviper) protein is Vascular endothelial growth factor isoform GtVF.